Here is a 343-residue protein sequence, read N- to C-terminus: Dihydroorotase (343 aa).

Zn(2+)-binding residues include His14 and His16. Residues 16 to 18 and Asn42 contribute to the substrate site; that span reads HVR. Zn(2+) is bound by residues Lys98, His135, and His173. The residue at position 98 (Lys98) is an N6-carboxylysine. Residue His135 participates in substrate binding. A substrate-binding site is contributed by Leu219. Asp247 is a binding site for Zn(2+). Asp247 is an active-site residue. Substrate-binding residues include His251 and Ala263.

This sequence belongs to the metallo-dependent hydrolases superfamily. DHOase family. Class II DHOase subfamily. Homodimer. The cofactor is Zn(2+).

The catalysed reaction is (S)-dihydroorotate + H2O = N-carbamoyl-L-aspartate + H(+). It functions in the pathway pyrimidine metabolism; UMP biosynthesis via de novo pathway; (S)-dihydroorotate from bicarbonate: step 3/3. In terms of biological role, catalyzes the reversible cyclization of carbamoyl aspartate to dihydroorotate. This Marinobacter nauticus (strain ATCC 700491 / DSM 11845 / VT8) (Marinobacter aquaeolei) protein is Dihydroorotase.